The primary structure comprises 260 residues: 1-(5-phosphoribosyl)-5-[(5-phosphoribosylamino)methylideneamino] imidazole-4-carboxamide isomerase (260 aa).

The active-site Proton acceptor is the Asp8. Residue Asp130 is the Proton donor of the active site.

Belongs to the HisA/HisF family.

The protein resides in the cytoplasm. It carries out the reaction 1-(5-phospho-beta-D-ribosyl)-5-[(5-phospho-beta-D-ribosylamino)methylideneamino]imidazole-4-carboxamide = 5-[(5-phospho-1-deoxy-D-ribulos-1-ylimino)methylamino]-1-(5-phospho-beta-D-ribosyl)imidazole-4-carboxamide. The protein operates within amino-acid biosynthesis; L-histidine biosynthesis; L-histidine from 5-phospho-alpha-D-ribose 1-diphosphate: step 4/9. In Chlorobaculum parvum (strain DSM 263 / NCIMB 8327) (Chlorobium vibrioforme subsp. thiosulfatophilum), this protein is 1-(5-phosphoribosyl)-5-[(5-phosphoribosylamino)methylideneamino] imidazole-4-carboxamide isomerase.